Here is a 541-residue protein sequence, read N- to C-terminus: CTP synthase (541 aa).

Positions 1-268 are amidoligase domain; the sequence is MAKFIFITGG…AEIVCRRLGL (268 aa). Serine 13 lines the CTP pocket. Serine 13 serves as a coordination point for UTP. ATP is bound by residues 14–19 and aspartate 71; that span reads GLGKGI. Mg(2+) is bound by residues aspartate 71 and glutamate 141. CTP contacts are provided by residues 148–150, 189–194, and lysine 225; these read DIE and KTKPTQ. UTP is bound by residues 189–194 and lysine 225; that span reads KTKPTQ. The 247-residue stretch at 293 to 539 folds into the Glutamine amidotransferase type-1 domain; that stretch reads EIALVGKYVA…IKAALEYRAG (247 aa). Glycine 359 provides a ligand contact to L-glutamine. Cysteine 386 acts as the Nucleophile; for glutamine hydrolysis in catalysis. L-glutamine-binding positions include 387–390, glutamate 410, and arginine 467; that span reads MGMQ. Active-site residues include histidine 512 and glutamate 514.

The protein belongs to the CTP synthase family. In terms of assembly, homotetramer.

The catalysed reaction is UTP + L-glutamine + ATP + H2O = CTP + L-glutamate + ADP + phosphate + 2 H(+). It carries out the reaction L-glutamine + H2O = L-glutamate + NH4(+). The enzyme catalyses UTP + NH4(+) + ATP = CTP + ADP + phosphate + 2 H(+). The protein operates within pyrimidine metabolism; CTP biosynthesis via de novo pathway; CTP from UDP: step 2/2. With respect to regulation, allosterically activated by GTP, when glutamine is the substrate; GTP has no effect on the reaction when ammonia is the substrate. The allosteric effector GTP functions by stabilizing the protein conformation that binds the tetrahedral intermediate(s) formed during glutamine hydrolysis. Inhibited by the product CTP, via allosteric rather than competitive inhibition. Catalyzes the ATP-dependent amination of UTP to CTP with either L-glutamine or ammonia as the source of nitrogen. Regulates intracellular CTP levels through interactions with the four ribonucleotide triphosphates. In Symbiobacterium thermophilum (strain DSM 24528 / JCM 14929 / IAM 14863 / T), this protein is CTP synthase.